Reading from the N-terminus, the 141-residue chain is Nucleoside diphosphate kinase 1 (141 aa).

ATP-binding residues include lysine 11, phenylalanine 59, arginine 87, threonine 93, arginine 104, and asparagine 114. Histidine 117 serves as the catalytic Pros-phosphohistidine intermediate.

It belongs to the NDK family. Homotetramer. Mg(2+) serves as cofactor.

Its subcellular location is the cytoplasm. It carries out the reaction a 2'-deoxyribonucleoside 5'-diphosphate + ATP = a 2'-deoxyribonucleoside 5'-triphosphate + ADP. The enzyme catalyses a ribonucleoside 5'-diphosphate + ATP = a ribonucleoside 5'-triphosphate + ADP. Major role in the synthesis of nucleoside triphosphates other than ATP. The ATP gamma phosphate is transferred to the NDP beta phosphate via a ping-pong mechanism, using a phosphorylated active-site intermediate. The chain is Nucleoside diphosphate kinase 1 from Protochlamydia amoebophila (strain UWE25).